Here is a 373-residue protein sequence, read N- to C-terminus: RNA cytidine acetyltransferase (373 aa).

Arginine 53 serves as a coordination point for ATP. Acetyl-CoA is bound by residues 216-218 (IAT) and 223-229 (TGMGYGS). Residues 246 to 271 (GEFEEENEAAKPADEESDDESNLLKE) are disordered. Arginine 313 serves as a coordination point for acetyl-CoA.

Belongs to the RNA cytidine acetyltransferase family. NAT10 subfamily.

The protein resides in the nucleus. It is found in the nucleolus. The catalysed reaction is a cytidine in 18S rRNA + acetyl-CoA + ATP + H2O = an N(4)-acetylcytidine in 18S rRNA + ADP + phosphate + CoA + H(+). It catalyses the reaction a cytidine in tRNA + acetyl-CoA + ATP + H2O = an N(4)-acetylcytidine in tRNA + ADP + phosphate + CoA + H(+). In terms of biological role, RNA cytidine acetyltransferase with specificity toward both 18S rRNA and tRNAs. Catalyzes the formation of N(4)-acetylcytidine (ac4C) in 18S rRNA. Required for early nucleolar cleavages of precursor rRNA at sites A0, A1 and A2 during 18S rRNA synthesis. Catalyzes the formation of ac4C in serine and leucine tRNAs. Requires a tRNA-binding adapter protein for full tRNA acetyltransferase activity but not for 18S rRNA acetylation. In Achlya ambisexualis (Water mold), this protein is RNA cytidine acetyltransferase.